The sequence spans 347 residues: UPF0284 protein SSO2213 (347 aa).

It belongs to the UPF0284 family.

In Saccharolobus solfataricus (strain ATCC 35092 / DSM 1617 / JCM 11322 / P2) (Sulfolobus solfataricus), this protein is UPF0284 protein SSO2213.